The sequence spans 717 residues: Methylcrotonoyl-CoA carboxylase subunit alpha, mitochondrial (717 aa).

Residues M1 to G38 constitute a mitochondrion transit peptide. The Biotin carboxylation domain occupies I45–K490. Residue K159 participates in ATP binding. In terms of domain architecture, ATP-grasp spans K163–A360. An N6-acetyllysine mark is found at K180 and K193. ATP contacts are provided by residues K201 and G207 to G208. K233 carries the N6-acetyllysine modification. The ATP site is built by H251, H278, and E318. R335 is an active-site residue. K490 is modified (N6-acetyllysine). K577 is modified (N6-acetyllysine; alternate). The residue at position 577 (K577) is an N6-succinyllysine; alternate. In terms of domain architecture, Biotinyl-binding spans S622–E711. Position 677 is an N6-biotinyllysine (K677).

Probably a dodecamer composed of six biotin-containing alpha subunits (MCCC1) and six beta (MCCC2) subunits. Interacts (via the biotin carboxylation domain) with SIRT4. The cofactor is biotin. Post-translationally, acetylated.

The protein resides in the mitochondrion matrix. It catalyses the reaction 3-methylbut-2-enoyl-CoA + hydrogencarbonate + ATP = 3-methyl-(2E)-glutaconyl-CoA + ADP + phosphate + H(+). The protein operates within amino-acid degradation; L-leucine degradation; (S)-3-hydroxy-3-methylglutaryl-CoA from 3-isovaleryl-CoA: step 2/3. Biotin-attachment subunit of the 3-methylcrotonyl-CoA carboxylase, an enzyme that catalyzes the conversion of 3-methylcrotonyl-CoA to 3-methylglutaconyl-CoA, a critical step for leucine and isovaleric acid catabolism. The polypeptide is Methylcrotonoyl-CoA carboxylase subunit alpha, mitochondrial (Mccc1) (Mus musculus (Mouse)).